Consider the following 512-residue polypeptide: Glycerol kinase 2 (512 aa).

Threonine 18 serves as a coordination point for ADP. Residues threonine 18, threonine 19, and serine 20 each contribute to the ATP site. Threonine 18 is a binding site for sn-glycerol 3-phosphate. Arginine 22 lines the ADP pocket. Sn-glycerol 3-phosphate-binding residues include arginine 88, glutamate 89, tyrosine 140, and aspartate 255. Residues arginine 88, glutamate 89, tyrosine 140, aspartate 255, and glutamine 256 each coordinate glycerol. ADP contacts are provided by threonine 277 and glycine 321. Positions 277, 321, 325, and 422 each coordinate ATP. ADP-binding residues include glycine 422 and asparagine 426.

This sequence belongs to the FGGY kinase family.

It carries out the reaction glycerol + ATP = sn-glycerol 3-phosphate + ADP + H(+). The protein operates within polyol metabolism; glycerol degradation via glycerol kinase pathway; sn-glycerol 3-phosphate from glycerol: step 1/1. Inhibited by fructose 1,6-bisphosphate (FBP). Functionally, key enzyme in the regulation of glycerol uptake and metabolism. Catalyzes the phosphorylation of glycerol to yield sn-glycerol 3-phosphate. The sequence is that of Glycerol kinase 2 from Streptomyces coelicolor (strain ATCC BAA-471 / A3(2) / M145).